A 237-amino-acid chain; its full sequence is MGQKVHPNGIRLGITKPWNSTWFANTKDFADNLYSDFQVRQFLTKELKNASLSKITIERPAKSIRVTIHTARPGVVIGKKGEDVEKLRKAVAAIAGVPAQINISEVRKPELDGKLVADSITSQLERRVMFRRAMKRAVQNAMRLGAKGIKVEVSGRLGGAEIARTEWYREGRVPLHTLRADIDYATSEAHTTYGVIGVKVWIFKGEVLGGLAAVNAAAAQEQAPAKPKRDNKRRAAK.

The 69-residue stretch at 39 to 107 folds into the KH type-2 domain; that stretch reads VRQFLTKELK…PAQINISEVR (69 aa).

Belongs to the universal ribosomal protein uS3 family. Part of the 30S ribosomal subunit. Forms a tight complex with proteins S10 and S14.

Functionally, binds the lower part of the 30S subunit head. Binds mRNA in the 70S ribosome, positioning it for translation. This Aeromonas hydrophila subsp. hydrophila (strain ATCC 7966 / DSM 30187 / BCRC 13018 / CCUG 14551 / JCM 1027 / KCTC 2358 / NCIMB 9240 / NCTC 8049) protein is Small ribosomal subunit protein uS3.